The sequence spans 161 residues: Transcriptional regulator MraZ (161 aa).

SpoVT-AbrB domains lie at 7 to 55 and 84 to 127; these read RYTN…GPAF and SAEL…EPGA.

Belongs to the MraZ family. In terms of assembly, forms oligomers.

The protein localises to the cytoplasm. The protein resides in the nucleoid. This chain is Transcriptional regulator MraZ, found in Parvibaculum lavamentivorans (strain DS-1 / DSM 13023 / NCIMB 13966).